We begin with the raw amino-acid sequence, 362 residues long: UDP-N-acetylglucosamine--N-acetylmuramyl-(pentapeptide) pyrophosphoryl-undecaprenol N-acetylglucosamine transferase (362 aa).

UDP-N-acetyl-alpha-D-glucosamine-binding positions include 14–16, Asn122, Arg163, Ser190, and Gln285; that span reads TGG.

It belongs to the glycosyltransferase 28 family. MurG subfamily.

The protein resides in the cell inner membrane. The catalysed reaction is di-trans,octa-cis-undecaprenyl diphospho-N-acetyl-alpha-D-muramoyl-L-alanyl-D-glutamyl-meso-2,6-diaminopimeloyl-D-alanyl-D-alanine + UDP-N-acetyl-alpha-D-glucosamine = di-trans,octa-cis-undecaprenyl diphospho-[N-acetyl-alpha-D-glucosaminyl-(1-&gt;4)]-N-acetyl-alpha-D-muramoyl-L-alanyl-D-glutamyl-meso-2,6-diaminopimeloyl-D-alanyl-D-alanine + UDP + H(+). Its pathway is cell wall biogenesis; peptidoglycan biosynthesis. Cell wall formation. Catalyzes the transfer of a GlcNAc subunit on undecaprenyl-pyrophosphoryl-MurNAc-pentapeptide (lipid intermediate I) to form undecaprenyl-pyrophosphoryl-MurNAc-(pentapeptide)GlcNAc (lipid intermediate II). This is UDP-N-acetylglucosamine--N-acetylmuramyl-(pentapeptide) pyrophosphoryl-undecaprenol N-acetylglucosamine transferase from Prochlorococcus marinus (strain MIT 9215).